The chain runs to 174 residues: MSNSNYQVSLERIKKVVPEELLTNALLAAIDNSGERMSQIIVDKKDNGNDYYLTIHRFFVYSNEEFTAFDKEDVADVEFVNGTPDGEVIITLKDGKVLHPSHICYGRAFDFIQDVKPKVITMAGYDSTIRGEFPQLLDPDHAEEIDRLRRWMQDGNISHYEYDDANPAYPKAGK.

This Lactobacillus sp. (strain 30a) protein is Protein HdcB (hdcB).